Here is an 811-residue protein sequence, read N- to C-terminus: LPS-assembly protein LptD (811 aa).

Residues 1 to 17 (MTEPNRARKTRQRTAFA) form the signal peptide. Residues 1 to 22 (MTEPNRARKTRQRTAFAAPDQR) form a disordered region.

This sequence belongs to the LptD family. As to quaternary structure, component of the lipopolysaccharide transport and assembly complex. Interacts with LptE and LptA.

It is found in the cell outer membrane. In terms of biological role, together with LptE, is involved in the assembly of lipopolysaccharide (LPS) at the surface of the outer membrane. This chain is LPS-assembly protein LptD, found in Ralstonia nicotianae (strain ATCC BAA-1114 / GMI1000) (Ralstonia solanacearum).